Here is a 40-residue protein sequence, read N- to C-terminus: DCPSGWSSFKQYCYKPFKQLKTWEDAERFCLEQVKGAHLV.

A C-type lectin domain is found at 1–40; it reads DCPSGWSSFKQYCYKPFKQLKTWEDAERFCLEQVKGAHLV. A disulfide bridge connects residues Cys2 and Cys13.

The protein belongs to the snaclec family. As to quaternary structure, heterodimer of subunits alpha and beta; disulfide-linked. Expressed by the venom gland.

It localises to the secreted. In terms of biological role, platelet antagonist that specifically and reversibly binds to a site on platelet glycoprotein Ibalpha (GP1BA) close to or identical with the site for vWF binding. It inhibits the binding of vWF to platelets and vWF-dependent shear-induced platelet aggregation. The sequence is that of Snaclec tokaracetin subunit alpha from Protobothrops tokarensis (Tokara habu).